The following is a 657-amino-acid chain: Penicillin-binding protein activator LpoA (657 aa).

The N-terminal stretch at 1–25 (MLSSTFVRSKAGLVPVILAALILAA) is a signal peptide. Cys26 is lipidated: N-palmitoyl cysteine. Cys26 carries the S-diacylglycerol cysteine lipid modification.

The protein belongs to the LpoA family. Interacts with PBP1a.

The protein localises to the cell outer membrane. Its function is as follows. Regulator of peptidoglycan synthesis that is essential for the function of penicillin-binding protein 1A (PBP1a). The sequence is that of Penicillin-binding protein activator LpoA from Yersinia pseudotuberculosis serotype O:1b (strain IP 31758).